Consider the following 403-residue polypeptide: Phosphoglycerate kinase (403 aa).

Substrate is bound by residues 21–23, R36, 59–62, R119, and R159; these read DFN and HLGR. Residues K214, G301, E332, and 359–362 contribute to the ATP site; that span reads GGDS.

Belongs to the phosphoglycerate kinase family. As to quaternary structure, monomer.

Its subcellular location is the cytoplasm. The catalysed reaction is (2R)-3-phosphoglycerate + ATP = (2R)-3-phospho-glyceroyl phosphate + ADP. It participates in carbohydrate degradation; glycolysis; pyruvate from D-glyceraldehyde 3-phosphate: step 2/5. The protein is Phosphoglycerate kinase of Lactobacillus johnsonii (strain CNCM I-12250 / La1 / NCC 533).